The following is a 165-amino-acid chain: Endoribonuclease YbeY (165 aa).

Positions 130, 134, and 140 each coordinate Zn(2+).

This sequence belongs to the endoribonuclease YbeY family. The cofactor is Zn(2+).

It localises to the cytoplasm. Functionally, single strand-specific metallo-endoribonuclease involved in late-stage 70S ribosome quality control and in maturation of the 3' terminus of the 16S rRNA. This Streptococcus sanguinis (strain SK36) protein is Endoribonuclease YbeY.